We begin with the raw amino-acid sequence, 118 residues long: uncharacterized protein (118 aa).

This is an uncharacterized protein from Rickettsia prowazekii (strain Madrid E).